A 286-amino-acid chain; its full sequence is Bifunctional protein FolD (286 aa).

NADP(+) is bound by residues 165–167 (GRS), Ser190, and Val231.

This sequence belongs to the tetrahydrofolate dehydrogenase/cyclohydrolase family. In terms of assembly, homodimer.

It catalyses the reaction (6R)-5,10-methylene-5,6,7,8-tetrahydrofolate + NADP(+) = (6R)-5,10-methenyltetrahydrofolate + NADPH. The enzyme catalyses (6R)-5,10-methenyltetrahydrofolate + H2O = (6R)-10-formyltetrahydrofolate + H(+). It functions in the pathway one-carbon metabolism; tetrahydrofolate interconversion. Catalyzes the oxidation of 5,10-methylenetetrahydrofolate to 5,10-methenyltetrahydrofolate and then the hydrolysis of 5,10-methenyltetrahydrofolate to 10-formyltetrahydrofolate. This Bacillus cereus (strain G9842) protein is Bifunctional protein FolD.